The following is a 455-amino-acid chain: MSATAISDLFEKPAQFKNKKIKLTGWLKNKRTSANIIFLEVNDGSTLLNLQAVVKQDQPELFALAESISLASAVSVSGTVALTPKSKQPLELVVKQINVLSTARADYPLQKKEHSLEFFRNNAYLRVRARTYFAIMKVRSLLSQAIFDYFFKNDFVLVHSPILTSNDCEGAGETFELKQGKEFFNKTTYLTVSGQFGAECYAQAFKKVFTFGPTFRAEKSHTSRHLSEFWMIEPEVAFANLKDLIKLIESTVKTVIKQVMQKAKQELDFLEKQFDVKLMERLKQITSTKNFHVLEYTKALEILKTAQASGQANFEVQDFNFGLDLKTEHERFLCEQHFHNQPVFVINYPKDFKAFYMKQNADGRTVGAVDLLFPQIGEICGGSEREGNLEKLVERCQAMQIDTQTLNWYLDMRKWGYFASAGFGLGFDRLLAYICGLENIRDAIPFPRAHGSINY.

This sequence belongs to the class-II aminoacyl-tRNA synthetase family. Homodimer.

The protein localises to the cytoplasm. The enzyme catalyses tRNA(Asn) + L-asparagine + ATP = L-asparaginyl-tRNA(Asn) + AMP + diphosphate + H(+). The protein is Asparagine--tRNA ligase of Mycoplasma pneumoniae (strain ATCC 29342 / M129 / Subtype 1) (Mycoplasmoides pneumoniae).